The chain runs to 446 residues: Glycine--tRNA ligase (446 aa).

Substrate is bound by residues R100 and E158. ATP contacts are provided by residues 190–192 (RNE), 200–205 (FRTREF), 275–276 (EL), and 319–322 (GIER). Substrate is bound at residue 205–209 (FEQFE). Residue 315-319 (EPAVG) coordinates substrate.

The protein belongs to the class-II aminoacyl-tRNA synthetase family. As to quaternary structure, homodimer.

The protein resides in the cytoplasm. It catalyses the reaction tRNA(Gly) + glycine + ATP = glycyl-tRNA(Gly) + AMP + diphosphate. Catalyzes the attachment of glycine to tRNA(Gly). This is Glycine--tRNA ligase from Mycoplasma genitalium (strain ATCC 33530 / DSM 19775 / NCTC 10195 / G37) (Mycoplasmoides genitalium).